Consider the following 246-residue polypeptide: Aquaporin SIP1-1 (246 aa).

The next 2 membrane-spanning stretches (helical) occupy residues 13–33 (AAVT…TAAV) and 45–65 (YALL…NLLC). An NPA 1 motif is present at residues 74–76 (NPT). Transmembrane regions (helical) follow at residues 95–115 (FPLA…AMAI), 139–159 (GAAA…WIIV), and 166–186 (IVKT…GAAY). The NPA 2 motif lies at 192-194 (NPA). The helical transmembrane segment at 214-234 (VYWICPFVGAVLAAWVFRAVF) threads the bilayer.

Belongs to the MIP/aquaporin (TC 1.A.8) family. SIP (TC 1.A.8.10) subfamily. In terms of tissue distribution, expressed in roots, leaves and anthers.

It localises to the membrane. Its function is as follows. Aquaporins facilitate the transport of water and small neutral solutes across cell membranes. The sequence is that of Aquaporin SIP1-1 (SIP1-1) from Oryza sativa subsp. japonica (Rice).